Consider the following 77-residue polypeptide: Acyl carrier protein (77 aa).

The 76-residue stretch at 1–76 (MSVEQRVKEI…DVLDYIKSKQ (76 aa)) folds into the Carrier domain. Ser-36 is subject to O-(pantetheine 4'-phosphoryl)serine.

This sequence belongs to the acyl carrier protein (ACP) family. 4'-phosphopantetheine is transferred from CoA to a specific serine of apo-ACP by AcpS. This modification is essential for activity because fatty acids are bound in thioester linkage to the sulfhydryl of the prosthetic group.

It localises to the cytoplasm. It functions in the pathway lipid metabolism; fatty acid biosynthesis. Functionally, carrier of the growing fatty acid chain in fatty acid biosynthesis. This is Acyl carrier protein from Sulfurihydrogenibium sp. (strain YO3AOP1).